Here is a 614-residue protein sequence, read N- to C-terminus: Dolichyl-diphosphooligosaccharide--protein glycosyltransferase subunit 1A (614 aa).

The first 25 residues, 1–25, serve as a signal peptide directing secretion; sequence MKQSSVVDLLLLLLAIALLATPAFS. The Lumenal portion of the chain corresponds to 26–432; it reads DLVLSKVERR…QVYYKFSNIN (407 aa). N-linked (GlcNAc...) asparagine glycosylation is found at Asn-94 and Asn-299. Lys-311 is covalently cross-linked (Glycyl lysine isopeptide (Lys-Gly) (interchain with G-Cter in ubiquitin)). N-linked (GlcNAc...) asparagine glycosylation occurs at Asn-352. A helical membrane pass occupies residues 433–453; the sequence is LLSEPLMLISGFFILFITCII. Topologically, residues 454-614 are cytoplasmic; that stretch reads YTRADISISK…EDLLEFIDEI (161 aa).

This sequence belongs to the OST1 family. As to quaternary structure, component of the oligosaccharyltransferase (OST) complex.

Its subcellular location is the endoplasmic reticulum membrane. It participates in protein modification; protein glycosylation. In terms of biological role, subunit of the oligosaccharyl transferase (OST) complex that catalyzes the initial transfer of a defined glycan (Glc(3)Man(9)GlcNAc(2) in eukaryotes) from the lipid carrier dolichol-pyrophosphate to an asparagine residue within an Asn-X-Ser/Thr consensus motif in nascent polypeptide chains, the first step in protein N-glycosylation. N-glycosylation occurs cotranslationally and the complex associates with the Sec61 complex at the channel-forming translocon complex that mediates protein translocation across the endoplasmic reticulum (ER). All subunits are required for a maximal enzyme activity. This chain is Dolichyl-diphosphooligosaccharide--protein glycosyltransferase subunit 1A (OST1A), found in Arabidopsis thaliana (Mouse-ear cress).